The chain runs to 963 residues: MLGSIAKKIFGSSNDRRVKGYRPRVAQINALEPEIQALSDEALRARTDMLKAELANGKSLDDILVPAFATVREAAKRVFGQRHFDVQLIGGMVLHEGGIAEMKTGEGKTLVATLPVYLNALEGKGVHVVTVNDYLASRDAEWMGQVYRFLGLSVGTIVHGLDDAQRKEAYACDITYGTNNEYGFDYLRDNMKYELSQLAQRGHNFAIVDEVDSILIDEARTPLIISGPVDDRSELYVAVDALMPRLRKEFYDLDEKQRTVSLTEEGNEFIEEAMREAGLLKEGDLYDAHNVTLVHHVNQALRAHTLFTRDKDYIVKNDEVVIIDEFTGRMMQGRRYSEGLHQALEAKERVTIQPENQTLASITFQNYFRLYKKLAGMTGTASTEADEFAEIYKLDVVDIPTNKEVERVDEDDEVYRTVGEKYEGIIAEIDKAHARHQPILVGTGSIEKSEHLAEMLKKAGYSLLDYSDPNALTDVYAAAREGRVTKRFAVLNARFHEQEAYIVAEAGVPGAITIATNMAGRGTDIKLGGNLEMRIEKELGHLADGPERDAAIAAIKAEIAENRTKVLASGEPADPAAGRKKDLPGGLYIIGTERHESRRIDNQLRGRSGRQGDPGRSKFYLSLQDDLMRIFGSDRMDGMLQKLGLEQGEAIIHPWINKAIEKAQQKVEARNFDMRKNVLKYDNVMNDQRKVVFEQRRDFMGQDSVRETVDEMREGVIDDLVARHIPENAYAEQWDVAGLREQVKEILNLDVPVEDWAKEEGIADEEMRERLLKAAETAYAERTEKNGAEVTAYIEKQVLLQTLDHLWREHLVTLDHLRQVIGWRGFAQRDPLNEYKSEAFDLFNGLVTALREQVTAQLSRVEIMLQEPPAEFPAGGPALPPMFAQHLDPVTGENEMDYAGFGSGSDGGGGPAYGFAAQGLAADGAVLERDPTDANTWGRVGRNEPCPCGSGKKYKHCHGSLQA.

Residues Q87, 105–109, and D524 contribute to the ATP site; that span reads GEGKT. 4 residues coordinate Zn(2+): C946, C948, C957, and H958.

This sequence belongs to the SecA family. Monomer and homodimer. Part of the essential Sec protein translocation apparatus which comprises SecA, SecYEG and auxiliary proteins SecDF-YajC and YidC. Requires Zn(2+) as cofactor.

The protein localises to the cell inner membrane. The protein resides in the cytoplasm. The catalysed reaction is ATP + H2O + cellular proteinSide 1 = ADP + phosphate + cellular proteinSide 2.. Functionally, part of the Sec protein translocase complex. Interacts with the SecYEG preprotein conducting channel. Has a central role in coupling the hydrolysis of ATP to the transfer of proteins into and across the cell membrane, serving both as a receptor for the preprotein-SecB complex and as an ATP-driven molecular motor driving the stepwise translocation of polypeptide chains across the membrane. In Methylobacterium radiotolerans (strain ATCC 27329 / DSM 1819 / JCM 2831 / NBRC 15690 / NCIMB 10815 / 0-1), this protein is Protein translocase subunit SecA.